Consider the following 445-residue polypeptide: Maltoporin (445 aa).

The N-terminal stretch at Met1–Ala24 is a signal peptide.

It belongs to the porin LamB (TC 1.B.3) family. Homotrimer formed of three 18-stranded antiparallel beta-barrels, containing three independent channels.

Its subcellular location is the cell outer membrane. The catalysed reaction is beta-maltose(in) = beta-maltose(out). Its function is as follows. Involved in the transport of maltose and maltodextrins. The sequence is that of Maltoporin from Shigella flexneri.